The following is a 568-amino-acid chain: uncharacterized protein (568 aa).

Over residues 334–346 (DDNEEKNNDRPKI) the composition is skewed to basic and acidic residues. Disordered regions lie at residues 334–382 (DDNE…NDQN) and 436–479 (QVEE…SCKN). Residues 458-477 (KIASSASKNDNSNNKNSKSC) are compositionally biased toward low complexity.

This sequence to yeast YJL043w.

This is an uncharacterized protein from Saccharomyces cerevisiae (strain ATCC 204508 / S288c) (Baker's yeast).